The following is a 275-amino-acid chain: Echotoxin-2 (275 aa).

Residues 1–23 (MKRNILALVVVVALISQSRPAES) form the signal peptide. The tract at residues 23–32 (SAGGTIIATL) is plays an important role in the hemolytic activity. The segment at 49 to 67 (ETGASVASAAAAATSSDYS) is N-terminal region. Gly123, Ser141, Pro143, Tyr176, and Tyr177 together coordinate phosphocholine. A trp-rich region, which is important for the binding to lipid membrane region spans residues 141 to 156 (SAPYNFDFYSNWLAVG). Residues 249-275 (RAIQQELARRAEEEKQRKRKALDEMLK) constitute a propeptide that is removed on maturation.

It belongs to the actinoporin family. Sea anemone subfamily. Octamer or nonamer in membranes. Monomer in the soluble state. In terms of tissue distribution, salivary gland.

The protein resides in the secreted. The protein localises to the nematocyst. It is found in the target cell membrane. Functionally, pore-forming protein that forms cations-selective hydrophilic pores of around 1 nm and causes cardiac stimulation and cytolysis. Pore formation is a multi-step process that involves specific recognition of membrane sphingomyelin (but neither cholesterol nor phosphatidylcholine) using aromatic rich region and adjacent phosphocholine (POC) binding site, firm binding to the membrane (mainly driven by hydrophobic interactions) accompanied by the transfer of the N-terminal region to the lipid-water interface and finally pore formation after oligomerization of monomers. Exhibits both hemolytic and lethal activities. Gangliosides potently inhibits the hemolytic activity. This chain is Echotoxin-2, found in Monoplex parthenopeus (Giant triton).